Consider the following 366-residue polypeptide: L-Ala-D/L-Glu epimerase (366 aa).

Residues Arg-24, Thr-135, and Lys-160 each contribute to the substrate site. Lys-162 acts as the Proton acceptor; specific for (R)-substrate epimerization in catalysis. Mg(2+) is bound by residues Asp-191, Glu-219, and Asp-244. Lys-268 functions as the Proton acceptor; specific for (S)-substrate epimerization in the catalytic mechanism. Substrate contacts are provided by Ser-296, Ile-298, Asp-321, and Asp-323.

It belongs to the mandelate racemase/muconate lactonizing enzyme family. As to quaternary structure, homooctamer; tetramer of dimers. Mg(2+) serves as cofactor.

It carries out the reaction L-alanyl-L-glutamate = L-alanyl-D-glutamate. The protein operates within cell wall degradation; peptidoglycan degradation. Functionally, catalyzes the epimerization of L-Ala-D-Glu to L-Ala-L-Glu and has probably a role in the metabolism of the murein peptide, of which L-Ala-D-Glu is a component. Is also able to catalyze the reverse reaction and the epimerization of the other Ala-X dipeptides L-Ala-L-Asp, L-Ala-L-Leu, L-Ala-L-Met, and L-Ala-L-Ser. Is not able to epimerize other L-Ala-X dipeptides. Is also active with L-Ser-L-Glu and, oddly, L-Pro-L-Glu, but not with L-Glu-L-Glu, L-Lys-L-Glu, L-Lys-L-Ala, or D-Ala-D-Ala. The sequence is that of L-Ala-D/L-Glu epimerase (ykfB) from Bacillus subtilis (strain 168).